We begin with the raw amino-acid sequence, 321 residues long: uncharacterized protein (321 aa).

This is an uncharacterized protein from Acanthamoeba polyphaga (Amoeba).